A 430-amino-acid polypeptide reads, in one-letter code: Trigger factor (430 aa).

Residues 163–248 (GDTAVFDFAG…LHEVKTKQVP (86 aa)) form the PPIase FKBP-type domain.

Belongs to the FKBP-type PPIase family. Tig subfamily.

It is found in the cytoplasm. It carries out the reaction [protein]-peptidylproline (omega=180) = [protein]-peptidylproline (omega=0). Functionally, involved in protein export. Acts as a chaperone by maintaining the newly synthesized protein in an open conformation. Functions as a peptidyl-prolyl cis-trans isomerase. The sequence is that of Trigger factor from Exiguobacterium sp. (strain ATCC BAA-1283 / AT1b).